Reading from the N-terminus, the 764-residue chain is MFLLMASVLPIRQAPMNGTPISASAAAGVDGVGAAVALAAATKKSAAAAAAVAEMAKTLTVDTDDAFAGLLELAADDDAEGLRRALERAPPAAADEAGLWYGRRKVLEHRTPLMVAATYGSLAVLRLLLSLPSVDVNRRCGSDGTTALHCAASGGSPSCVEAVKLLLAAGADADATDASGYRPADVISVPPKMFDAKIALQDLLGCPKAGHGVLRVVTRAANSMLSPVSSPTAEDARSPSAAVMMTTKFADLPRVVTSEKKEYPVDPSLPDIKNSIYASDEFRMYSFKIRPCSRAYSHDWTECPFVHPGENARRRDPRKYHYSCVPCPDFRKGVCRRGDMCEYAHGVFECWLHPAQYRTRLCKDGTSCNRRVCFFAHTTDELRPLYVSTGSAVPSPRASATATMEMAAAMGLMPGSPSSVSAVMSPFTPPMSPSGNGMPPSLGWQQPNVPTLHLPGSSLQSSRLRTSLSARDMPADDYSLMQDIDSQLINDLCYSRIGSSTGNHTSRTKSLNPSNLDDLFSAEMVSSPRYSNADQGGMFSPSHKAAFLNQFQQQQQALLSPINTVFSPKSVDNQQLPSHSSLLQASLGISSPGRMSPRCVESGSPMNSHLAAALAQREKQQQTMRSLSSRDLGPSAARASGVVGSPLSSSWSKWGSPSGTPDWGVNGEELGKLRRSSSFELRSGGDDPDLSWVHTLVKESPPEKQVTTAESINSVGPSPLMPPSVSNGEGPSLNAPLDGHDQAAVIGALLEQMQLDQHIGSLAT.

2 ANK repeats span residues 108-138 (EHRTPLMVAATYGSLAVLRLLLSLPSVDVNR) and 143-175 (DGTTALHCAASGGSPSCVEAVKLLLAAGADADA). The segment at 321–348 (HYSCVPCPDFRKGVCRRGDMCEYAHGVF) adopts a C3H1-type zinc-finger fold. Disordered regions lie at residues 616–665 (QREK…DWGV) and 698–732 (KESPPEKQVTTAESINSVGPSPLMPPSVSNGEGPS). Low complexity predominate over residues 640–659 (SGVVGSPLSSSWSKWGSPSG). The segment covering 705–716 (QVTTAESINSVG) has biased composition (polar residues).

The chain is Zinc finger CCCH domain-containing protein 24 from Oryza sativa subsp. japonica (Rice).